The following is a 336-amino-acid chain: UDP-3-O-acylglucosamine N-acyltransferase (336 aa).

The active-site Proton acceptor is the His-236.

It belongs to the transferase hexapeptide repeat family. LpxD subfamily. Homotrimer.

The enzyme catalyses a UDP-3-O-[(3R)-3-hydroxyacyl]-alpha-D-glucosamine + a (3R)-hydroxyacyl-[ACP] = a UDP-2-N,3-O-bis[(3R)-3-hydroxyacyl]-alpha-D-glucosamine + holo-[ACP] + H(+). It functions in the pathway bacterial outer membrane biogenesis; LPS lipid A biosynthesis. Catalyzes the N-acylation of UDP-3-O-acylglucosamine using 3-hydroxyacyl-ACP as the acyl donor. Is involved in the biosynthesis of lipid A, a phosphorylated glycolipid that anchors the lipopolysaccharide to the outer membrane of the cell. This is UDP-3-O-acylglucosamine N-acyltransferase from Aromatoleum aromaticum (strain DSM 19018 / LMG 30748 / EbN1) (Azoarcus sp. (strain EbN1)).